Consider the following 379-residue polypeptide: Chaperone protein DnaJ (379 aa).

A J domain is found at 5–70; that stretch reads DFYEVLGVSR…QKRSAYDQYG (66 aa). The CR-type zinc-finger motif lies at 134-212; that stretch reads GCDKEIEVPT…CHGEGRVHKT (79 aa). Residues cysteine 147, cysteine 150, cysteine 164, cysteine 167, cysteine 186, cysteine 189, cysteine 200, and cysteine 203 each contribute to the Zn(2+) site. CXXCXGXG motif repeat units follow at residues 147–154, 164–171, 186–193, and 200–207; these read CDPCEGTG, CSTCHGQG, CPTCHGKG, and CNSCHGEG.

The protein belongs to the DnaJ family. Homodimer. Zn(2+) is required as a cofactor.

It localises to the cytoplasm. In terms of biological role, participates actively in the response to hyperosmotic and heat shock by preventing the aggregation of stress-denatured proteins and by disaggregating proteins, also in an autonomous, DnaK-independent fashion. Unfolded proteins bind initially to DnaJ; upon interaction with the DnaJ-bound protein, DnaK hydrolyzes its bound ATP, resulting in the formation of a stable complex. GrpE releases ADP from DnaK; ATP binding to DnaK triggers the release of the substrate protein, thus completing the reaction cycle. Several rounds of ATP-dependent interactions between DnaJ, DnaK and GrpE are required for fully efficient folding. Also involved, together with DnaK and GrpE, in the DNA replication of plasmids through activation of initiation proteins. This is Chaperone protein DnaJ from Aliivibrio fischeri (strain ATCC 700601 / ES114) (Vibrio fischeri).